The sequence spans 350 residues: Glycerol-1-phosphate dehydrogenase [NAD(P)+] (350 aa).

Residues 94–98 and 116–119 each bind NAD(+); these read GKPID and TVAS. Residue Asp-121 participates in substrate binding. Ser-125 serves as a coordination point for NAD(+). Residue Asp-168 participates in substrate binding. Asp-168 and His-248 together coordinate Zn(2+). His-252 is a substrate binding site. Position 264 (His-264) interacts with Zn(2+).

This sequence belongs to the glycerol-1-phosphate dehydrogenase family. Zn(2+) serves as cofactor.

The protein localises to the cytoplasm. It carries out the reaction sn-glycerol 1-phosphate + NAD(+) = dihydroxyacetone phosphate + NADH + H(+). The catalysed reaction is sn-glycerol 1-phosphate + NADP(+) = dihydroxyacetone phosphate + NADPH + H(+). Its pathway is membrane lipid metabolism; glycerophospholipid metabolism. Functionally, catalyzes the NAD(P)H-dependent reduction of dihydroxyacetonephosphate (DHAP or glycerone phosphate) to glycerol 1-phosphate (G1P). The G1P thus generated is used as the glycerophosphate backbone of phospholipids in the cellular membranes of Archaea. This is Glycerol-1-phosphate dehydrogenase [NAD(P)+] from Halorubrum lacusprofundi (strain ATCC 49239 / DSM 5036 / JCM 8891 / ACAM 34).